Reading from the N-terminus, the 420-residue chain is Zinc finger and BTB domain-containing protein 42 (420 aa).

The BTB domain occupies 24 to 92 (CDCTVLVGDA…MYEGRLDLHN (69 aa)). 2 disordered regions span residues 127–204 (TRTL…HPPC) and 222–247 (VKAE…PPPV). The segment covering 227-241 (DSFSEQDSSSPQSAD) has biased composition (low complexity). C2H2-type zinc fingers lie at residues 292-314 (CICP…LSAH), 332-354 (PTCP…ERTH), 360-382 (YTCV…AVVH), and 388-411 (HACR…RKFH).

The protein belongs to the krueppel C2H2-type zinc-finger protein family. ZBTB18 subfamily. In terms of tissue distribution, highly expressed in skeletal muscle and ovary (at protein level). Low expression in brain, lung, spleen, liver and heart (at protein level). Not detected in kidney and intestines (at protein level). Also observed in testis and, at lower levels, in stomach and nervous system.

It is found in the cytoplasm. The protein localises to the nucleus. The protein resides in the nucleoplasm. Its function is as follows. Transcriptional repressor. Specifically binds DNA and probably acts by recruiting chromatin remodeling multiprotein complexes. This chain is Zinc finger and BTB domain-containing protein 42 (Zbtb42), found in Mus musculus (Mouse).